Here is a 258-residue protein sequence, read N- to C-terminus: Global transcriptional regulator CodY (258 aa).

Residues 1 to 156 are GAF domain; the sequence is MSSLLDKTRM…SATIIGLEIL (156 aa). A DNA-binding region (H-T-H motif) is located at residues 204–223; the sequence is ASKIADKVGITRSVIVNALR.

It belongs to the CodY family.

Its subcellular location is the cytoplasm. In terms of biological role, DNA-binding global transcriptional regulator which is involved in the adaptive response to starvation and acts by directly or indirectly controlling the expression of numerous genes in response to nutrient availability. During rapid exponential growth, CodY is highly active and represses genes whose products allow adaptation to nutrient depletion. The protein is Global transcriptional regulator CodY of Clostridium botulinum (strain ATCC 19397 / Type A).